Here is a 201-residue protein sequence, read N- to C-terminus: UPF0301 protein Rleg2_0617 (201 aa).

It belongs to the UPF0301 (AlgH) family.

This Rhizobium leguminosarum bv. trifolii (strain WSM2304) protein is UPF0301 protein Rleg2_0617.